A 159-amino-acid polypeptide reads, in one-letter code: Bacterioferritin (159 aa).

In terms of domain architecture, Ferritin-like diiron spans 1-145 (MQGDPEVLRL…TQLELMDKLG (145 aa)). Fe cation is bound by residues E18 and E51. M52 contacts heme b. H54, E94, E127, and H130 together coordinate Fe cation.

The protein belongs to the bacterioferritin family. Homooligomer of 24 subunits, arranged as 12 dimers, that are packed together to form an approximately spherical molecule with a central cavity, in which large amounts of iron can be deposited. Heme b is required as a cofactor.

The enzyme catalyses 4 Fe(2+) + O2 + 4 H(+) = 4 Fe(3+) + 2 H2O. It carries out the reaction Fe(2+)(in) = Fe(2+)(out). Iron-storage protein, whose ferroxidase center binds Fe(2+), oxidizes it using dioxygen to Fe(3+), and participates in the subsequent Fe(3+) oxide mineral core formation within the central cavity of the BFR protein shell. In Mycolicibacterium paratuberculosis (strain ATCC BAA-968 / K-10) (Mycobacterium paratuberculosis), this protein is Bacterioferritin (bfr).